The primary structure comprises 384 residues: Polar flagellin C (384 aa).

Residues 317 to 347 (AKQNRLSHSINNLANIQENVDASNSRIKDTD) adopt a coiled-coil conformation.

It belongs to the bacterial flagellin family. As to quaternary structure, heteromer of multiple flagellin subunits including FlaA, FlaB/D, FlaC, FlaE and FlaF. Homomer of FlaC is not able to form a functional filament.

The protein localises to the secreted. The protein resides in the bacterial flagellum. In terms of biological role, flagellin is the subunit protein which polymerizes to form the filaments of bacterial flagella. FlaC is not essential for polar flagellar synthesis and swimming motility. Homomer of FlaC is not able to form a functional filament. This is Polar flagellin C (flaC) from Vibrio parahaemolyticus serotype O3:K6 (strain RIMD 2210633).